A 445-amino-acid polypeptide reads, in one-letter code: E3 ubiquitin-protein ligase pellino homolog 3 (445 aa).

Residues 1-24 (MVLEGNPDVGSPRTSDLQHPGSQG) form a disordered region. A Phosphoserine modification is found at Ser11. The segment covering 12–24 (PRTSDLQHPGSQG) has biased composition (polar residues).

Belongs to the pellino family. Interacts with TRAF6, MAP3K14 and MAP3K7. Post-translationally, phosphorylated by IRAK1 enhancing its E3 ligase activity.

It catalyses the reaction S-ubiquitinyl-[E2 ubiquitin-conjugating enzyme]-L-cysteine + [acceptor protein]-L-lysine = [E2 ubiquitin-conjugating enzyme]-L-cysteine + N(6)-ubiquitinyl-[acceptor protein]-L-lysine.. Its pathway is protein modification; protein ubiquitination. Its function is as follows. E3 ubiquitin ligase catalyzing the covalent attachment of ubiquitin moieties onto substrate proteins. Involved in the TLR and IL-1 signaling pathways via interaction with the complex containing IRAK kinases and TRAF6. Mediates 'Lys-63'-linked polyubiquitination of IRAK1. Can activate AP1/JUN and ELK1. Acts as a regulator of innate immunity by mediating 'Lys-63'-linked polyubiquitination of RIPK2 downstream of NOD1 and NOD2, thereby transforming RIPK2 into a scaffolding protein for downstream effectors, ultimately leading to activation of the NF-kappa-B and MAP kinases signaling. Catalyzes 'Lys-63'-linked polyubiquitination of RIPK2 in parallel of XIAP. In Mus musculus (Mouse), this protein is E3 ubiquitin-protein ligase pellino homolog 3.